A 660-amino-acid chain; its full sequence is Bifunctional polymyxin resistance protein ArnA (660 aa).

The segment at 1–304 is formyltransferase ArnAFT; sequence MKTVVFAYHD…TLGLVQGSRL (304 aa). Position 86–88 (86–88) interacts with (6R)-10-formyltetrahydrofolate; the sequence is HLI. His104 serves as the catalytic Proton donor; for formyltransferase activity. Residues Arg114 and 136–140 contribute to the (6R)-10-formyltetrahydrofolate site; that span reads VTRAD. A dehydrogenase ArnADH region spans residues 314-660; the sequence is RRTRVLILGV…RTVDLTDKPS (347 aa). NAD(+)-binding positions include Asp347 and 368–369; that span reads DI. UDP-alpha-D-glucuronate-binding positions include Ala393, Tyr398, and 432-433; that span reads TS. The active-site Proton acceptor; for decarboxylase activity is the Glu434. UDP-alpha-D-glucuronate is bound by residues Arg460, Asn492, 526–535, and Tyr613; that span reads KLIDGGKQKR. Catalysis depends on Arg619, which acts as the Proton donor; for decarboxylase activity.

This sequence in the N-terminal section; belongs to the Fmt family. UDP-L-Ara4N formyltransferase subfamily. In the C-terminal section; belongs to the NAD(P)-dependent epimerase/dehydratase family. UDP-glucuronic acid decarboxylase subfamily. Homohexamer, formed by a dimer of trimers.

The catalysed reaction is UDP-alpha-D-glucuronate + NAD(+) = UDP-beta-L-threo-pentopyranos-4-ulose + CO2 + NADH. The enzyme catalyses UDP-4-amino-4-deoxy-beta-L-arabinose + (6R)-10-formyltetrahydrofolate = UDP-4-deoxy-4-formamido-beta-L-arabinose + (6S)-5,6,7,8-tetrahydrofolate + H(+). It participates in nucleotide-sugar biosynthesis; UDP-4-deoxy-4-formamido-beta-L-arabinose biosynthesis; UDP-4-deoxy-4-formamido-beta-L-arabinose from UDP-alpha-D-glucuronate: step 1/3. Its pathway is nucleotide-sugar biosynthesis; UDP-4-deoxy-4-formamido-beta-L-arabinose biosynthesis; UDP-4-deoxy-4-formamido-beta-L-arabinose from UDP-alpha-D-glucuronate: step 3/3. It functions in the pathway bacterial outer membrane biogenesis; lipopolysaccharide biosynthesis. In terms of biological role, bifunctional enzyme that catalyzes the oxidative decarboxylation of UDP-glucuronic acid (UDP-GlcUA) to UDP-4-keto-arabinose (UDP-Ara4O) and the addition of a formyl group to UDP-4-amino-4-deoxy-L-arabinose (UDP-L-Ara4N) to form UDP-L-4-formamido-arabinose (UDP-L-Ara4FN). The modified arabinose is attached to lipid A and is required for resistance to polymyxin and cationic antimicrobial peptides. The polypeptide is Bifunctional polymyxin resistance protein ArnA (Shigella dysenteriae serotype 1 (strain Sd197)).